The primary structure comprises 484 residues: Probable glycine dehydrogenase (decarboxylating) subunit 2 (484 aa).

Lys264 carries the post-translational modification N6-(pyridoxal phosphate)lysine.

Belongs to the GcvP family. C-terminal subunit subfamily. As to quaternary structure, the glycine cleavage system is composed of four proteins: P, T, L and H. In this organism, the P 'protein' is a heterodimer of two subunits. It depends on pyridoxal 5'-phosphate as a cofactor.

The catalysed reaction is N(6)-[(R)-lipoyl]-L-lysyl-[glycine-cleavage complex H protein] + glycine + H(+) = N(6)-[(R)-S(8)-aminomethyldihydrolipoyl]-L-lysyl-[glycine-cleavage complex H protein] + CO2. The glycine cleavage system catalyzes the degradation of glycine. The P protein binds the alpha-amino group of glycine through its pyridoxal phosphate cofactor; CO(2) is released and the remaining methylamine moiety is then transferred to the lipoamide cofactor of the H protein. This Legionella pneumophila subsp. pneumophila (strain Philadelphia 1 / ATCC 33152 / DSM 7513) protein is Probable glycine dehydrogenase (decarboxylating) subunit 2.